Here is a 218-residue protein sequence, read N- to C-terminus: Octanoyltransferase (218 aa).

The region spanning 30-213 (GEIEDTLILV…YFSEVFNYDI (184 aa)) is the BPL/LPL catalytic domain. Substrate-binding positions include 75-82 (RGGDVTYH), 143-145 (AIG), and 156-158 (GFA). Cys174 acts as the Acyl-thioester intermediate in catalysis.

The protein belongs to the LipB family.

The protein resides in the cytoplasm. It carries out the reaction octanoyl-[ACP] + L-lysyl-[protein] = N(6)-octanoyl-L-lysyl-[protein] + holo-[ACP] + H(+). The protein operates within protein modification; protein lipoylation via endogenous pathway; protein N(6)-(lipoyl)lysine from octanoyl-[acyl-carrier-protein]: step 1/2. Catalyzes the transfer of endogenously produced octanoic acid from octanoyl-acyl-carrier-protein onto the lipoyl domains of lipoate-dependent enzymes. Lipoyl-ACP can also act as a substrate although octanoyl-ACP is likely to be the physiological substrate. In Alkaliphilus metalliredigens (strain QYMF), this protein is Octanoyltransferase.